Here is a 601-residue protein sequence, read N- to C-terminus: Glutamine--fructose-6-phosphate aminotransferase [isomerizing] (601 aa).

The active-site Nucleophile; for GATase activity is the Cys2. The 215-residue stretch at Cys2–Asp216 folds into the Glutamine amidotransferase type-2 domain. 2 SIS domains span residues Ile282–Asp421 and Ile453–Pro591. The active-site For Fru-6P isomerization activity is the Lys596.

Homodimer.

It is found in the cytoplasm. It carries out the reaction D-fructose 6-phosphate + L-glutamine = D-glucosamine 6-phosphate + L-glutamate. Catalyzes the first step in hexosamine metabolism, converting fructose-6P into glucosamine-6P using glutamine as a nitrogen source. This Listeria monocytogenes serovar 1/2a (strain ATCC BAA-679 / EGD-e) protein is Glutamine--fructose-6-phosphate aminotransferase [isomerizing].